Reading from the N-terminus, the 162-residue chain is Nucleotide-binding protein SGR_2909 (162 aa).

It belongs to the YajQ family.

Nucleotide-binding protein. This Streptomyces griseus subsp. griseus (strain JCM 4626 / CBS 651.72 / NBRC 13350 / KCC S-0626 / ISP 5235) protein is Nucleotide-binding protein SGR_2909.